Here is a 298-residue protein sequence, read N- to C-terminus: Tyrosine recombinase XerC (298 aa).

Residues 1–84 (MNHIQDAFLN…TLRTFYEYWM (84 aa)) form the Core-binding (CB) domain. One can recognise a Tyr recombinase domain in the interval 105–286 (YLPQFFYEEE…SNQQLRKVYL (182 aa)). Residues arginine 145, lysine 169, histidine 238, arginine 241, and histidine 264 contribute to the active site. Tyrosine 273 acts as the O-(3'-phospho-DNA)-tyrosine intermediate in catalysis.

The protein belongs to the 'phage' integrase family. XerC subfamily. Forms a cyclic heterotetrameric complex composed of two molecules of XerC and two molecules of XerD.

It is found in the cytoplasm. Functionally, site-specific tyrosine recombinase, which acts by catalyzing the cutting and rejoining of the recombining DNA molecules. The XerC-XerD complex is essential to convert dimers of the bacterial chromosome into monomers to permit their segregation at cell division. It also contributes to the segregational stability of plasmids. The sequence is that of Tyrosine recombinase XerC from Staphylococcus aureus (strain USA300).